The sequence spans 150 residues: MASNVFSEIILFVSVLIITAAVSGILATSTHKISLGLEQRGDALSSQLTKDFEIINDPGYVLKNATDTTMIYLKNTGKSPITFDKEVISVLVDGNPVEISNTYVEGDSSVRVLGSSKVGKLHITYNTSGYHRFKVVTSEGIARTFTGEIV.

The chain crosses the membrane as a helical span at residues 9–29 (IILFVSVLIITAAVSGILATS).

This sequence belongs to the archaeal FlaG family.

It localises to the cell membrane. It is found in the archaeal flagellum. The sequence is that of Putative flagella-related protein G (flaG) from Methanococcus voltae.